The following is an 88-amino-acid chain: UPF0297 protein LACR_0137 (88 aa).

This sequence belongs to the UPF0297 family.

The protein is UPF0297 protein LACR_0137 of Lactococcus lactis subsp. cremoris (strain SK11).